The following is a 413-amino-acid chain: Gamma-glutamyl phosphate reductase (413 aa).

It belongs to the gamma-glutamyl phosphate reductase family.

The protein resides in the cytoplasm. It catalyses the reaction L-glutamate 5-semialdehyde + phosphate + NADP(+) = L-glutamyl 5-phosphate + NADPH + H(+). It participates in amino-acid biosynthesis; L-proline biosynthesis; L-glutamate 5-semialdehyde from L-glutamate: step 2/2. Its function is as follows. Catalyzes the NADPH-dependent reduction of L-glutamate 5-phosphate into L-glutamate 5-semialdehyde and phosphate. The product spontaneously undergoes cyclization to form 1-pyrroline-5-carboxylate. The polypeptide is Gamma-glutamyl phosphate reductase (Leuconostoc mesenteroides subsp. mesenteroides (strain ATCC 8293 / DSM 20343 / BCRC 11652 / CCM 1803 / JCM 6124 / NCDO 523 / NBRC 100496 / NCIMB 8023 / NCTC 12954 / NRRL B-1118 / 37Y)).